Here is a 220-residue protein sequence, read N- to C-terminus: Outer membrane protein assembly factor BamD (220 aa).

The signal sequence occupies residues 1 to 22 (MRLKHFKTFLFITMAIIVIGTG). A lipid anchor (N-palmitoyl cysteine) is attached at Cys23. Cys23 carries S-diacylglycerol cysteine lipidation.

It belongs to the BamD family. As to quaternary structure, part of the Bam complex.

The protein localises to the cell outer membrane. Part of the outer membrane protein assembly complex, which is involved in assembly and insertion of beta-barrel proteins into the outer membrane. The protein is Outer membrane protein assembly factor BamD of Helicobacter pylori (strain ATCC 700392 / 26695) (Campylobacter pylori).